Here is a 150-residue protein sequence, read N- to C-terminus: uncharacterized protein (150 aa).

The protein belongs to the aspartate/glutamate racemases family.

This is an uncharacterized protein from Pectobacterium carotovorum subsp. carotovorum (Erwinia carotovora subsp. carotovora).